The chain runs to 336 residues: Mitochondrial import receptor subunit TOM40 homolog (336 aa).

Residues 1-58 (MGNVLAASSPAPPPAGSPPVPGLVSVPPGFTMPPVAGLTPTPDKKEPQEERLPNPGTF) form a disordered region. A compositionally biased stretch (pro residues) spans 10–21 (PAPPPAGSPPVP). A compositionally biased stretch (basic and acidic residues) spans 42–52 (PDKKEPQEERL).

Belongs to the Tom40 family. In terms of assembly, forms part of the preprotein translocase complex of the outer mitochondrial membrane (TOM complex). Interacts with mitochondrial targeting sequences.

It localises to the mitochondrion outer membrane. Channel-forming protein essential for import of protein precursors into mitochondria. The polypeptide is Mitochondrial import receptor subunit TOM40 homolog (tomm40) (Xenopus laevis (African clawed frog)).